The following is a 136-amino-acid chain: Protein NrdI (136 aa).

Belongs to the NrdI family.

In terms of biological role, probably involved in ribonucleotide reductase function. This chain is Protein NrdI, found in Erwinia tasmaniensis (strain DSM 17950 / CFBP 7177 / CIP 109463 / NCPPB 4357 / Et1/99).